The chain runs to 469 residues: UDP-N-acetylmuramate--L-alanine ligase (469 aa).

ATP is bound at residue 119-125 (GTHGKTT).

It belongs to the MurCDEF family.

The protein localises to the cytoplasm. The catalysed reaction is UDP-N-acetyl-alpha-D-muramate + L-alanine + ATP = UDP-N-acetyl-alpha-D-muramoyl-L-alanine + ADP + phosphate + H(+). Its pathway is cell wall biogenesis; peptidoglycan biosynthesis. Cell wall formation. The sequence is that of UDP-N-acetylmuramate--L-alanine ligase from Ruthia magnifica subsp. Calyptogena magnifica.